A 583-amino-acid polypeptide reads, in one-letter code: MTSRIQMHRTSPPPAYGTSAPPSGFTLGASTTSTLQRWALPLLLVAFGLFYLLPLTSHGLWIPDETRYAQISQEMLLSGDWVAPHFMGIRYFEKPIAGYWLIAIGQAVFGDNLFGVRIASALSTGLSVLLAYLITRRMWNDPRKSFAAALLYMSFGLIAGQAGYSNLDPQFTLWVNLSLVALWFALDGRSTRERLLAWAGLGVACGMGFMTKGFLAWLLPVLIALPYMIWQRRLGELVRYGLVAVLVAIGISLPWVLSIHAHEPDFWRFFFWHEHIRRFAADNAQHTRPWWFYLPLLVASSLPWAALLPGTFMQAWKDKRQAPTGFLLLWFLLPLAFFSLSRGKLPTYIMPCLLPLAVLMGSALIDRINAIQGRSIRINSLLNLLIGVAAMVALLYIQLTRPVYGHNEMLGLSLVFIMLMGWIIANLLPAARPLQYWPAPALGIWLLVALLPAGMPGFIVHNQMPDQFIKEHIEELRQTKTLLSNDLGAASALAWRLQRPEVTLYNTEGELKYGLAYADSAQRKVSMAEVGQWVSEARKQGSVGVVMRVKDVVESEEVALLPPGGKRYEEGNMLVLILPQSQP.

The interval 1–20 (MTSRIQMHRTSPPPAYGTSA) is disordered. The next 12 helical transmembrane spans lie at 42–62 (LLLV…GLWI), 113–135 (LFGV…YLIT), 145–165 (SFAA…AGYS), 166–186 (NLDP…WFAL), 209–229 (FMTK…PYMI), 241–261 (GLVA…SIHA), 290–310 (WWFY…LLPG), 321–341 (QAPT…FSLS), 345–365 (LPTY…SALI), 380–400 (SLLN…IQLT), 409–429 (MLGL…NLLP), and 440–460 (PALG…GFIV).

This sequence belongs to the glycosyltransferase 83 family.

It localises to the cell inner membrane. The catalysed reaction is 4-amino-4-deoxy-alpha-L-arabinopyranosyl di-trans,octa-cis-undecaprenyl phosphate + lipid IVA = lipid IIA + di-trans,octa-cis-undecaprenyl phosphate.. It functions in the pathway lipopolysaccharide metabolism; 4-amino-4-deoxy-beta-L-arabinose-lipid A biosynthesis. Its function is as follows. Catalyzes the transfer of the L-Ara4N moiety of the glycolipid undecaprenyl phosphate-alpha-L-Ara4N to lipid A. The modified arabinose is attached to lipid A and is required for resistance to polymyxin and cationic antimicrobial peptides. The protein is Undecaprenyl phosphate-alpha-4-amino-4-deoxy-L-arabinose arabinosyl transferase 2 of Pseudomonas fluorescens (strain ATCC BAA-477 / NRRL B-23932 / Pf-5).